The following is a 192-amino-acid chain: Adenylate kinase (192 aa).

An ATP-binding site is contributed by glycine 10–threonine 18.

This sequence belongs to the archaeal adenylate kinase family.

The protein localises to the cytoplasm. The catalysed reaction is AMP + ATP = 2 ADP. The polypeptide is Adenylate kinase (Methanoculleus marisnigri (strain ATCC 35101 / DSM 1498 / JR1)).